The sequence spans 478 residues: Proline--tRNA ligase (478 aa).

The protein belongs to the class-II aminoacyl-tRNA synthetase family. ProS type 3 subfamily. As to quaternary structure, homodimer.

It is found in the cytoplasm. It catalyses the reaction tRNA(Pro) + L-proline + ATP = L-prolyl-tRNA(Pro) + AMP + diphosphate. In terms of biological role, catalyzes the attachment of proline to tRNA(Pro) in a two-step reaction: proline is first activated by ATP to form Pro-AMP and then transferred to the acceptor end of tRNA(Pro). The protein is Proline--tRNA ligase of Clostridium botulinum (strain Loch Maree / Type A3).